The sequence spans 425 residues: Probable isoprenylcysteine alpha-carbonyl methylesterase ICMEL1 (425 aa).

Basic and acidic residues predominate over residues 1 to 10; that stretch reads MQVELADRAA. The disordered stretch occupies residues 1-42; it reads MQVELADRAAARPSETGEAPPSSPAAAAAASAAAEDAPLLPG. The span at 24–34 shows a compositional bias: low complexity; it reads PAAAAAASAAA. The next 2 membrane-spanning stretches (helical) occupy residues 99-119 and 154-174; these read FLALCCYTFLLMPGFIQVVYY and VVAFVTGGAWIIGYKGWGALL. Substrate is bound by residues 160-162 and 231-233; these read GGA and QSA. Active-site residues include Ser232, Asp334, and His366.

It belongs to the AB hydrolase superfamily. Isoprenylcysteine methylesterase family.

The protein localises to the endoplasmic reticulum membrane. Its subcellular location is the golgi apparatus membrane. The enzyme catalyses [protein]-C-terminal S-[(2E,6E)-farnesyl]-L-cysteine methyl ester + H2O = [protein]-C-terminal S-[(2E,6E)-farnesyl]-L-cysteine + methanol + H(+). Catalyzes the demethylation of isoprenylcysteine methylesters. The protein is Probable isoprenylcysteine alpha-carbonyl methylesterase ICMEL1 (IMCEL1) of Oryza sativa subsp. japonica (Rice).